The following is a 136-amino-acid chain: MKTGTATTRRRLLAVLIALALPGAAVALLAEPSATGASDPCAASEVARTVGSVAKSMGDYLDSHPETNQVMTAVLQQQVGPGSVASLKAHFEANPKVASDLHALSQPLTDLSTRCSLPISGLQAIGLMQAVQGARR.

The N-terminal stretch at 1 to 27 (MKTGTATTRRRLLAVLIALALPGAAVA) is a signal peptide. A disulfide bridge connects residues Cys-41 and Cys-115. Heme is bound by residues Tyr-60, His-64, and His-90.

As to quaternary structure, dimer of dimers.

Its subcellular location is the secreted. Its function is as follows. Part of a heme-iron acquisition system. Acts by binding heme and delivering it to the membrane proteins MmpL3 and MmpL11. Can use free heme or heme from host hemoglobin. In Mycobacterium tuberculosis (strain ATCC 25618 / H37Rv), this protein is Heme-binding protein Rv0203.